An 82-amino-acid polypeptide reads, in one-letter code: Cytochrome b559 subunit alpha (82 aa).

A helical transmembrane segment spans residues 21–35 (VIHSITVPALFIAGW). Histidine 23 provides a ligand contact to heme.

It belongs to the PsbE/PsbF family. Heterodimer of an alpha subunit and a beta subunit. PSII is composed of 1 copy each of membrane proteins PsbA, PsbB, PsbC, PsbD, PsbE, PsbF, PsbH, PsbI, PsbJ, PsbK, PsbL, PsbM, PsbT, PsbX, PsbY, PsbZ, Psb30/Ycf12, at least 3 peripheral proteins of the oxygen-evolving complex and a large number of cofactors. It forms dimeric complexes. Requires heme b as cofactor.

It localises to the plastid. The protein resides in the chloroplast thylakoid membrane. Its function is as follows. This b-type cytochrome is tightly associated with the reaction center of photosystem II (PSII). PSII is a light-driven water:plastoquinone oxidoreductase that uses light energy to abstract electrons from H(2)O, generating O(2) and a proton gradient subsequently used for ATP formation. It consists of a core antenna complex that captures photons, and an electron transfer chain that converts photonic excitation into a charge separation. The sequence is that of Cytochrome b559 subunit alpha from Chlamydomonas reinhardtii (Chlamydomonas smithii).